The following is a 164-amino-acid chain: MASHSGPSTSVLFLFCCLGGWLASHTLPVRLLRPSDDVQKIVEELQSLSKMLLKDVEEEKGVLVSQNYTLPCLSPDAQPPNNIHSPAIRAYLKTIRQLDNKSVIDEIIEHLDKLIFQDAPETNISVPTDTHECKRFILTISQQFSECMDLALKSLTSGAQQATT.

Residues 1 to 23 (MASHSGPSTSVLFLFCCLGGWLA) form the signal peptide. Asparagine 67 and asparagine 100 each carry an N-linked (GlcNAc...) asparagine glycan.

As to expression, detected at low levels in testis, bone marrow, skeletal muscle, kidney, colon, thymus, small intestine and trachea.

It localises to the secreted. Activates STAT3 and possibly STAT1 and STAT5 through the IL31 heterodimeric receptor composed of IL31RA and OSMR. May function in skin immunity. Enhances myeloid progenitor cell survival in vitro. Induces RETNLA and serum amyloid A protein expression in macrophages. This Homo sapiens (Human) protein is Interleukin-31 (IL31).